The following is a 148-amino-acid chain: UPF0756 membrane protein ESA_02180 (148 aa).

4 helical membrane passes run 4-24, 51-71, 86-106, and 112-132; these read ITLL…NMAV, VTVG…SGTL, LVAI…VALM, and IVAG…GVPV.

Belongs to the UPF0756 family.

It localises to the cell membrane. The polypeptide is UPF0756 membrane protein ESA_02180 (Cronobacter sakazakii (strain ATCC BAA-894) (Enterobacter sakazakii)).